We begin with the raw amino-acid sequence, 161 residues long: Nucleotide-binding protein Lferr_1091 (161 aa).

This sequence belongs to the YajQ family.

Nucleotide-binding protein. In Acidithiobacillus ferrooxidans (strain ATCC 53993 / BNL-5-31) (Leptospirillum ferrooxidans (ATCC 53993)), this protein is Nucleotide-binding protein Lferr_1091.